We begin with the raw amino-acid sequence, 109 residues long: Ig kappa chain V region 3374 (109 aa).

The tract at residues 1–24 (ADIVMTQTPASVSAAVGGTVTINC) is framework-1. The segment at 25–35 (QASQNIDSWLA) is complementarity-determining-1. The interval 36-50 (WYQQKPGQPPKVLIY) is framework-2. Residues 51–57 (RTSTLAS) form a complementarity-determining-2 region. Residues 58–89 (GVPSRFKGSRSGTEFTLTISDLECADAATYYC) are framework-3. Positions 90-98 (QSYYSISSA) are complementarity-determining-3. A framework-4 region spans residues 99–108 (FGGGTEVVVK).

This chain is Ig kappa chain V region 3374, found in Oryctolagus cuniculus (Rabbit).